Consider the following 608-residue polypeptide: Albumin (608 aa).

The first 18 residues, 1-18 (MKWVTFLLLLFVSGSAFS), serve as a signal peptide directing secretion. A propeptide spanning residues 19-24 (RGVFRR) is cleaved from the precursor. 3 consecutive Albumin domains span residues 19–211 (RGVF…GVKE), 212–403 (KALV…EFQP), and 404–601 (LVEE…NLVT). His27 serves as a coordination point for Cu cation. A Phosphoserine modification is found at Ser29. 2 residues coordinate Ca(2+): Glu30 and Asp37. Cys77 and Cys86 are disulfide-bonded. Phosphoserine occurs at positions 82 and 89. A Zn(2+)-binding site is contributed by His91. 6 disulfide bridges follow: Cys99–Cys115, Cys114–Cys125, Cys148–Cys193, Cys192–Cys201, Cys224–Cys270, and Cys269–Cys277. Lys229 bears the N6-succinyllysine mark. Glu268 provides a ligand contact to Ca(2+). Zn(2+) contacts are provided by His271 and Asp273. The Ca(2+) site is built by Asp273, Glu276, and Asp279. 8 disulfide bridges follow: Cys289–Cys303, Cys302–Cys313, Cys340–Cys385, Cys384–Cys393, Cys416–Cys462, Cys461–Cys472, Cys485–Cys501, and Cys500–Cys511. Ser297 is subject to Phosphoserine. Ser443 bears the Phosphoserine mark. 2 positions are modified to phosphothreonine: Thr444 and Thr446. Lys460 is subject to N6-succinyllysine. Ser513 carries the phosphoserine modification. Intrachain disulfides connect Cys538–Cys583 and Cys582–Cys591. The residue at position 543 (Lys543) is an N6-succinyllysine. Lys558 bears the N6-methyllysine mark. Thr570 carries the phosphothreonine modification. Lys588 bears the N6-succinyllysine mark.

This sequence belongs to the ALB/AFP/VDB family. Part of a complex composed of complement component C3, CLCA1/CLCA3, A2ML1/OH and ALB/serum albumin. Interacts with FCGRT; this interaction regulates ALB homeostasis. Interacts with TASOR. In plasma, occurs in a covalently-linked complex with chromophore-bound alpha-1-microglobulin; this interaction does not prevent fatty acid binding to ALB. Post-translationally, phosphorylated by FAM20C in the extracellular medium. As to expression, plasma. Expressed in the granular cells within the cerebellum.

It localises to the secreted. Functionally, binds water, Ca(2+), Na(+), K(+), fatty acids, hormones, bilirubin and drugs. Its main function is the regulation of the colloidal osmotic pressure of blood. Major zinc transporter in plasma, typically binds about 80% of all plasma zinc. Major calcium and magnesium transporter in plasma, binds approximately 45% of circulating calcium and magnesium in plasma. Potentially has more than two calcium-binding sites and might additionally bind calcium in a non-specific manner. The shared binding site between zinc and calcium at residue Asp-273 suggests a crosstalk between zinc and calcium transport in the blood. The rank order of affinity is zinc &gt; calcium &gt; magnesium. Binds to the bacterial siderophore enterobactin and inhibits enterobactin-mediated iron uptake of E.coli from ferric transferrin, and may thereby limit the utilization of iron and growth of enteric bacteria such as E.coli. Does not prevent iron uptake by the bacterial siderophore aerobactin. The polypeptide is Albumin (Alb) (Mus musculus (Mouse)).